Reading from the N-terminus, the 362-residue chain is MAAWVKGGAADVDAAVEAAADLLAASRVPVLAGLSAEVSALRAAYRLAETLGASLDPVSGPSVYAELGALSAGGAMSTTRAETIGRADVILIVGNRPWDGELIAEIAAAAPSRGRAAGSERALLSLGGPQNGAIRHVAYAADAGGLTISLGHLRAFAKGHLAGEAAFADLAKRLFAAQYGVIVYDPEEVGELGAEMLQGLIRDLNESTRFFALTLADPFQGRAAVQLSAWTTGQAPRVGFGRHQPEHDSWRFDSARQIAAGEADAALWLASLPAPRPAWLGSLPTIAIVGEGSQEAAGETAEVVITVGVPGQSVGGALWNDRRGVIAYAEASDPAKTPAETETAAGVLTRIRDRLIEKGVSC.

In terms of assembly, octaheteromer. Part of the formyltransferase/hydrolase complex fhc; composed of FhcA, FhcB, FhcC and FhcD.

It is found in the cytoplasm. It participates in one-carbon metabolism; formaldehyde degradation; formate from formaldehyde (H(4)MPT route): step 4/5. Its function is as follows. Involved in the transformation of 5-formyl tetrahydromethanopterin (5-formyl-H(4)MPT) to methanofuran (MFR) and formate via the formylmethanofuran (formyl-MFR). In Methylorubrum extorquens (strain ATCC 14718 / DSM 1338 / JCM 2805 / NCIMB 9133 / AM1) (Methylobacterium extorquens), this protein is Formyltransferase/hydrolase complex Fhc subunit B (fhcB).